The sequence spans 493 residues: Accumulates dyads protein 4 (493 aa).

As to quaternary structure, interacts with CNM67, SPO21/MPC70 and NUD1.

The protein localises to the cytoplasm. It localises to the cytoskeleton. Its subcellular location is the microtubule organizing center. It is found in the spindle pole body. In terms of biological role, involved in the pathway that organizes the shaping and sizing of the prospore membrane (PSM) during sporulation. May be required to stabilize the outer plaque of the spindle pole body (SPB). This is Accumulates dyads protein 4 (ADY4) from Saccharomyces cerevisiae (strain ATCC 204508 / S288c) (Baker's yeast).